We begin with the raw amino-acid sequence, 338 residues long: Phenylalanine--tRNA ligase alpha subunit (338 aa).

Glu-253 contributes to the Mg(2+) binding site.

It belongs to the class-II aminoacyl-tRNA synthetase family. Phe-tRNA synthetase alpha subunit type 1 subfamily. In terms of assembly, tetramer of two alpha and two beta subunits. The cofactor is Mg(2+).

The protein localises to the cytoplasm. It catalyses the reaction tRNA(Phe) + L-phenylalanine + ATP = L-phenylalanyl-tRNA(Phe) + AMP + diphosphate + H(+). This Legionella pneumophila (strain Paris) protein is Phenylalanine--tRNA ligase alpha subunit.